The primary structure comprises 428 residues: Histone-lysine N-methyltransferase SMYD3 (428 aa).

Methionine 1 bears the N-acetylmethionine mark. In terms of domain architecture, SET spans 4-240 (LKVEKFTTAN…AGEELTICYL (237 aa)). S-adenosyl-L-methionine is bound at residue 14 to 16 (RGN). Cysteine 49, cysteine 52, cysteine 62, cysteine 65, cysteine 71, cysteine 75, histidine 83, and cysteine 87 together coordinate Zn(2+). The MYND-type zinc-finger motif lies at 49–87 (CDRCLLGKEKLMRCSQCRIAKYCSAKCQKKAWPDHRREC). S-adenosyl-L-methionine-binding positions include tyrosine 124, asparagine 132, 205–206 (NH), tyrosine 239, and phenylalanine 259. Residues 272 to 428 (DADMLTGDEQ…EECDANIRAS (157 aa)) are C-terminal domain; essential for histone methyltransferase activity, nuclear localization and mediates interaction with HSP90AA1.

This sequence belongs to the class V-like SAM-binding methyltransferase superfamily. Histone-lysine methyltransferase family. As to quaternary structure, interacts with HSPCA. Interacts with HELZ. Interacts with POLR2A; the interaction may be indirect and may be mediated by HELZ. Interacts with HSP90AA1; this interaction enhances SMYD3 histone-lysine N-methyltransferase.

The protein localises to the cytoplasm. It localises to the nucleus. It catalyses the reaction L-lysyl(4)-[histone H3] + 3 S-adenosyl-L-methionine = N(6),N(6),N(6)-trimethyl-L-lysyl(4)-[histone H3] + 3 S-adenosyl-L-homocysteine + 3 H(+). Its activity is regulated as follows. Histone methyltransferase activity strongly stimulated by HSPCA. Functionally, histone methyltransferase. Specifically methylates 'Lys-4' of histone H3, inducing di- and tri-methylation, but not monomethylation. Also methylates 'Lys-5' of histone H4. Plays an important role in transcriptional activation as a member of an RNA polymerase complex. Binds DNA containing 5'-CCCTCC-3' or 5'-GAGGGG-3' sequences. The protein is Histone-lysine N-methyltransferase SMYD3 (Smyd3) of Mus musculus (Mouse).